We begin with the raw amino-acid sequence, 590 residues long: Selenoprotein N (590 aa).

Residues 1 to 26 (MGRARPGQRGPPSPGPAAQPPAPPRR) form a disordered region. The N-terminal stretch at 1–43 (MGRARPGQRGPPSPGPAAQPPAPPRRRARSLALLGALLAAAAA) is a signal peptide. Residues 9-23 (RGPPSPGPAAQPPAP) show a composition bias toward pro residues. The 36-residue stretch at 67–102 (TLGTDGLFLFSSLDTDGDMYISPEEFKPIAEKLTGS) folds into the EF-hand domain. An N-linked (GlcNAc...) asparagine glycan is attached at N126. A non-standard amino acid (selenocysteine) is located at residue U127. N190 carries N-linked (GlcNAc...) asparagine glycosylation. A non-standard amino acid (selenocysteine) is located at residue U462. N-linked (GlcNAc...) asparagine glycosylation is found at N483, N505, and N531.

As to quaternary structure, interacts with RYR1, RYR2 and RYR3. In terms of processing, N-glycosylated. As to expression, isoform 1 and isoform 2 are expressed in skeletal muscle, brain, lung and placenta. Isoform 2 is also expressed in heart, diaphragm and stomach.

It localises to the endoplasmic reticulum membrane. In terms of biological role, plays an important role in cell protection against oxidative stress and in the regulation of redox-related calcium homeostasis. Regulates the calcium level of the ER by protecting the calcium pump ATP2A2 against the oxidoreductase ERO1A-mediated oxidative damage. Within the ER, ERO1A activity increases the concentration of H(2)O(2), which attacks the luminal thiols in ATP2A2 and thus leads to cysteinyl sulfenic acid formation (-SOH) and SEPN1 reduces the SOH back to free thiol (-SH), thus restoring ATP2A2 activity. Acts as a modulator of ryanodine receptor (RyR) activity: protects RyR from oxidation due to increased oxidative stress, or directly controls the RyR redox state, regulating the RyR-mediated calcium mobilization required for normal muscle development and differentiation. Functionally, essential for muscle regeneration and satellite cell maintenance in skeletal muscle. In Homo sapiens (Human), this protein is Selenoprotein N.